The sequence spans 285 residues: Probable endonuclease 4 (285 aa).

9 residues coordinate Zn(2+): His-69, His-109, Glu-145, Asp-179, His-182, His-216, Asp-229, His-231, and Glu-261.

It belongs to the AP endonuclease 2 family. Zn(2+) serves as cofactor.

The enzyme catalyses Endonucleolytic cleavage to 5'-phosphooligonucleotide end-products.. Its function is as follows. Endonuclease IV plays a role in DNA repair. It cleaves phosphodiester bonds at apurinic or apyrimidinic (AP) sites, generating a 3'-hydroxyl group and a 5'-terminal sugar phosphate. The polypeptide is Probable endonuclease 4 (Yersinia pseudotuberculosis serotype O:1b (strain IP 31758)).